Here is a 426-residue protein sequence, read N- to C-terminus: Serine--tRNA ligase (426 aa).

Residue threonine 233–glutamate 235 coordinates L-serine. Arginine 264–glutamate 266 is a binding site for ATP. An L-serine-binding site is contributed by glutamate 287. Glutamate 351–serine 354 lines the ATP pocket. Serine 387 is a binding site for L-serine.

Belongs to the class-II aminoacyl-tRNA synthetase family. Type-1 seryl-tRNA synthetase subfamily. As to quaternary structure, homodimer. The tRNA molecule binds across the dimer.

Its subcellular location is the cytoplasm. The enzyme catalyses tRNA(Ser) + L-serine + ATP = L-seryl-tRNA(Ser) + AMP + diphosphate + H(+). The catalysed reaction is tRNA(Sec) + L-serine + ATP = L-seryl-tRNA(Sec) + AMP + diphosphate + H(+). It participates in aminoacyl-tRNA biosynthesis; selenocysteinyl-tRNA(Sec) biosynthesis; L-seryl-tRNA(Sec) from L-serine and tRNA(Sec): step 1/1. Its function is as follows. Catalyzes the attachment of serine to tRNA(Ser). Is also able to aminoacylate tRNA(Sec) with serine, to form the misacylated tRNA L-seryl-tRNA(Sec), which will be further converted into selenocysteinyl-tRNA(Sec). The protein is Serine--tRNA ligase of Xylella fastidiosa (strain M12).